Here is a 125-residue protein sequence, read N- to C-terminus: Small ribosomal subunit protein uS12 (125 aa).

Residues Met-1–Pro-28 form a disordered region. Residues Arg-9–Lys-20 are compositionally biased toward basic residues. Asp-89 carries the post-translational modification 3-methylthioaspartic acid. The disordered stretch occupies residues Ala-104–Lys-125. A compositionally biased stretch (basic residues) spans Ser-113–Lys-125.

The protein belongs to the universal ribosomal protein uS12 family. In terms of assembly, part of the 30S ribosomal subunit. Contacts proteins S8 and S17. May interact with IF1 in the 30S initiation complex.

With S4 and S5 plays an important role in translational accuracy. Its function is as follows. Interacts with and stabilizes bases of the 16S rRNA that are involved in tRNA selection in the A site and with the mRNA backbone. Located at the interface of the 30S and 50S subunits, it traverses the body of the 30S subunit contacting proteins on the other side and probably holding the rRNA structure together. The combined cluster of proteins S8, S12 and S17 appears to hold together the shoulder and platform of the 30S subunit. The chain is Small ribosomal subunit protein uS12 from Persephonella marina (strain DSM 14350 / EX-H1).